We begin with the raw amino-acid sequence, 382 residues long: Anhydro-N-acetylmuramic acid kinase (382 aa).

9–16 provides a ligand contact to ATP; sequence GTSLDGID.

Belongs to the anhydro-N-acetylmuramic acid kinase family.

The enzyme catalyses 1,6-anhydro-N-acetyl-beta-muramate + ATP + H2O = N-acetyl-D-muramate 6-phosphate + ADP + H(+). The protein operates within amino-sugar metabolism; 1,6-anhydro-N-acetylmuramate degradation. Its pathway is cell wall biogenesis; peptidoglycan recycling. Functionally, catalyzes the specific phosphorylation of 1,6-anhydro-N-acetylmuramic acid (anhMurNAc) with the simultaneous cleavage of the 1,6-anhydro ring, generating MurNAc-6-P. Is required for the utilization of anhMurNAc either imported from the medium or derived from its own cell wall murein, and thus plays a role in cell wall recycling. This is Anhydro-N-acetylmuramic acid kinase from Bacillus anthracis (strain A0248).